We begin with the raw amino-acid sequence, 200 residues long: MSRYRGAVIKIIRRLGELPGLTRKTTTRTSRPGQHGTQARKPSEYAIRLEEKQKLRFNYGLTEKQLLQYVRTAKRIKGSTGEALLQLLEMRLDNVIFRLGMAPTIPAARQLVNHGHIKVNNTRVSIPSYQCKAGDMISIRQHPKSQSIVKNYLQFPGLANMPNHLQIDKDNLTGKINGIIERDWVALNELLIVEYYSRKG.

Positions 20–42 are disordered; the sequence is GLTRKTTTRTSRPGQHGTQARKP. Residues 23-37 are compositionally biased toward polar residues; the sequence is RKTTTRTSRPGQHGT. Residues 90-152 form the S4 RNA-binding domain; the sequence is MRLDNVIFRL…PKSQSIVKNY (63 aa).

This sequence belongs to the universal ribosomal protein uS4 family. As to quaternary structure, part of the 30S ribosomal subunit. Contacts protein S5. The interaction surface between S4 and S5 is involved in control of translational fidelity.

It is found in the plastid. The protein resides in the chloroplast. Its function is as follows. One of the primary rRNA binding proteins, it binds directly to 16S rRNA where it nucleates assembly of the body of the 30S subunit. Functionally, with S5 and S12 plays an important role in translational accuracy. This is Small ribosomal subunit protein uS4c (rps4) from Guillardia theta (Cryptophyte).